A 489-amino-acid chain; its full sequence is N-succinylglutamate 5-semialdehyde dehydrogenase (489 aa).

Residue 223 to 228 (GSSNTG) coordinates NAD(+). Catalysis depends on residues E246 and C280.

Belongs to the aldehyde dehydrogenase family. AstD subfamily.

It carries out the reaction N-succinyl-L-glutamate 5-semialdehyde + NAD(+) + H2O = N-succinyl-L-glutamate + NADH + 2 H(+). It functions in the pathway amino-acid degradation; L-arginine degradation via AST pathway; L-glutamate and succinate from L-arginine: step 4/5. In terms of biological role, catalyzes the NAD-dependent reduction of succinylglutamate semialdehyde into succinylglutamate. In Idiomarina loihiensis (strain ATCC BAA-735 / DSM 15497 / L2-TR), this protein is N-succinylglutamate 5-semialdehyde dehydrogenase.